The sequence spans 254 residues: Emerin (254 aa).

The residue at position 1 (Met-1) is an N-acetylmethionine. Residues 1-45 (MDNYADLSDTELTTLLRRYNIPHGPVVGSTRRLYEKKIFEYETQR) form the LEM domain. Phosphoserine is present on residues Ser-8 and Ser-29. Residues 46-222 (RRLSPPSSSA…PGAGLGQDRQ (177 aa)) form an interaction with F-actin region. Ser-49 is subject to Phosphoserine; by PKA. 7 positions are modified to phosphoserine: Ser-54, Ser-60, Ser-87, Ser-98, Ser-141, Ser-142, and Ser-143. Position 161 is a phosphotyrosine (Tyr-161). The tract at residues 168 to 186 (RPVSASRSSLDLSYYPTSS) is interaction with CTNNB1. Phosphoserine is present on residues Ser-171, Ser-173, and Ser-175. The chain crosses the membrane as a helical span at residues 223 to 243 (VPLWGQLLLFLVFVIVLFFIY).

As to quaternary structure, interacts with lamins A and C, BANF1, GMCL, BCLAF1 and YTHDC1/YT521. Interacts with TMEM43; the interaction retains emerin in the nuclear inner membrane. Interacts with SUN1 and SUN2. Interacts with ACTB, SPTAN1, F-actin, CTNNB1 and beta-tubulin. Interacts with TMEM201. Interacts with NEMP1. Post-translationally, found in four different phosphorylated forms, three of which appear to be associated with the cell cycle. As to expression, skeletal muscle, heart, colon, testis, ovary and pancreas.

The protein resides in the nucleus inner membrane. It is found in the nucleus outer membrane. In terms of biological role, stabilizes and promotes the formation of a nuclear actin cortical network. Stimulates actin polymerization in vitro by binding and stabilizing the pointed end of growing filaments. Inhibits beta-catenin activity by preventing its accumulation in the nucleus. Acts by influencing the nuclear accumulation of beta-catenin through a CRM1-dependent export pathway. Links centrosomes to the nuclear envelope via a microtubule association. Required for proper localization of non-farnesylated prelamin-A/C. Together with NEMP1, contributes to nuclear envelope stiffness in germ cells. EMD and BAF are cooperative cofactors of HIV-1 infection. Association of EMD with the viral DNA requires the presence of BAF and viral integrase. The association of viral DNA with chromatin requires the presence of BAF and EMD. This Homo sapiens (Human) protein is Emerin (EMD).